Consider the following 939-residue polypeptide: Isoleucine--tRNA ligase (939 aa).

Positions 58-68 (PYANGDIHIGH) match the 'HIGH' region motif. Glu-574 provides a ligand contact to L-isoleucyl-5'-AMP. The short motif at 615-619 (KMSKS) is the 'KMSKS' region element. Lys-618 provides a ligand contact to ATP. Positions 902, 905, 922, and 925 each coordinate Zn(2+).

Belongs to the class-I aminoacyl-tRNA synthetase family. IleS type 1 subfamily. Monomer. Zn(2+) serves as cofactor.

The protein resides in the cytoplasm. It catalyses the reaction tRNA(Ile) + L-isoleucine + ATP = L-isoleucyl-tRNA(Ile) + AMP + diphosphate. Its function is as follows. Catalyzes the attachment of isoleucine to tRNA(Ile). As IleRS can inadvertently accommodate and process structurally similar amino acids such as valine, to avoid such errors it has two additional distinct tRNA(Ile)-dependent editing activities. One activity is designated as 'pretransfer' editing and involves the hydrolysis of activated Val-AMP. The other activity is designated 'posttransfer' editing and involves deacylation of mischarged Val-tRNA(Ile). This Aromatoleum aromaticum (strain DSM 19018 / LMG 30748 / EbN1) (Azoarcus sp. (strain EbN1)) protein is Isoleucine--tRNA ligase.